Here is a 353-residue protein sequence, read N- to C-terminus: Protein RecA (353 aa).

80–87 is an ATP binding site; that stretch reads GPESSGKT.

Belongs to the RecA family.

The protein localises to the cytoplasm. Its function is as follows. Can catalyze the hydrolysis of ATP in the presence of single-stranded DNA, the ATP-dependent uptake of single-stranded DNA by duplex DNA, and the ATP-dependent hybridization of homologous single-stranded DNAs. It interacts with LexA causing its activation and leading to its autocatalytic cleavage. This is Protein RecA from Chlorobium chlorochromatii (strain CaD3).